A 115-amino-acid chain; its full sequence is UPF0738 protein SSP1780 (115 aa).

This sequence belongs to the UPF0738 family.

The chain is UPF0738 protein SSP1780 from Staphylococcus saprophyticus subsp. saprophyticus (strain ATCC 15305 / DSM 20229 / NCIMB 8711 / NCTC 7292 / S-41).